We begin with the raw amino-acid sequence, 153 residues long: Jacalin-related lectin Calsepa (153 aa).

Alanine 2 carries the N-acetylalanine modification. One can recognise a Jacalin-type lectin domain in the interval 6–152 (DTISGPWGNN…VDAIGTYNRH (147 aa)). 3 N-glycan binding regions span residues 17–18 (GN), 95–96 (DN), and 140–144 (GYYVD).

The protein belongs to the jacalin lectin family. As to quaternary structure, homodimer. In terms of processing, not glycosylated. In terms of tissue distribution, rhizome (at protein level). Detected in the cortex and the pith of rhizome. Not detected in vascular tissues, pericycle, endodermis or rhizodermis.

It localises to the cytoplasm. Hemagglutinating activity is most inhibited by methyl alpha-mannopyranoside. This activity is inhibited to a less extent (about a third of the inhibition of that of methyl alpha-mannopyranoside) by methyl alpha-glucoside, other alpha-glucosides, such as maltose, isomaltose, panose or palatinose, and alpha-glucosides modified at the second position, such as methyl 2-deoxy-alpha-arabinoglucopyranoside or methyl 2-acetamido-2-deoxy alpha-glucopyranoside. Mildly inhibited by free monosaccharides, with glucose presenting at least 20-fold less inhibitory effect on hemagglutinating activity than mannose. Glycoproteins are somewhat inhibitory, the best being asialothyroglobulin and ovomucoid. Not inhibited by isomaltitol, sucrose or trehalose. Mannose-binding lectin. Preferentially binds mannose at concentrations ranging between 5 and 25 mM, but also binds glucose. Has a marked preference for methylated sugar derivatives, such as alpha-MeMan and alpha-MeGlc, at concentration down to 5 mM. Binds to N-glycans, but not to glycolipid-type or other type of glycans. Binds N-linked high-mannose-type glycans. Has a preference for smaller (Man(2)-Man(6)) high-mannose-type glycans to larger (Man(7)-Man(9)) ones. Recognizes both alpha1-6 extended and alpha1-3 extended monoantennary glycans. The addition of alpha1-2Man to the Man-alpha1-3Man-beta branch results in a significant loss of affinity, but beta1-2GlcNAc has some affinity. Has less affinity for biantennary glycans. However, affinity is significant for the biantennary complex-type N-glycans with bisecting GlcNAc. No affinity is observed for tri- and tetra-antennary glycans. Binds bisected glycans of the mouse brain. Selectively binds to bisecting N-glycans which are in back-fold conformation, and does not favor a glycan with an extend conformation. Has hemagglutinating activity against rabbit erythrocytes at 0.3 ug/ml and against trypsin-treated human erythrocytes at 5 ug/ml. Has mitogenic activity in murine cells. The polypeptide is Jacalin-related lectin Calsepa (Calystegia sepium (Hedge bindweed)).